A 304-amino-acid chain; its full sequence is Uricase (304 aa).

A2 is modified (N-acetylalanine). 2 positions are modified to N6-acetyllysine; alternate: K10 and K23. 2 positions are modified to N6-succinyllysine; alternate: K10 and K23. Residue K23 is the Charge relay system of the active site. N6-acetyllysine occurs at positions 27 and 36. S39 and S63 each carry phosphoserine. The Charge relay system role is filled by T68. Positions 68 and 69 each coordinate urate. An N6-acetyllysine mark is found at K118, K122, and K164. F170 is a binding site for urate. N6-acetyllysine is present on residues K175 and K185. R187 serves as a coordination point for urate. N6-acetyllysine; alternate is present on residues K221 and K228. An N6-succinyllysine; alternate mark is found at K221 and K228. S232 carries the phosphoserine modification. Residues V235, Q236, and N262 each coordinate urate. Residue H264 is the Charge relay system of the active site. Position 278 is an N6-acetyllysine (K278). Y289 carries the phosphotyrosine modification. The short motif at 302-304 (SRL) is the Microbody targeting signal element.

The protein belongs to the uricase family.

The protein resides in the peroxisome. It catalyses the reaction urate + O2 + H2O = 5-hydroxyisourate + H2O2. The protein operates within purine metabolism; urate degradation; (S)-allantoin from urate: step 1/3. Functionally, catalyzes the oxidation of uric acid to 5-hydroxyisourate, which is further processed to form (S)-allantoin. In Macaca fascicularis (Crab-eating macaque), this protein is Uricase (UOX).